Reading from the N-terminus, the 110-residue chain is Ribonuclease P protein component 1 (110 aa).

Belongs to the eukaryotic/archaeal RNase P protein component 1 family. As to quaternary structure, consists of a catalytic RNA component and at least 4-5 protein subunits.

The protein resides in the cytoplasm. It catalyses the reaction Endonucleolytic cleavage of RNA, removing 5'-extranucleotides from tRNA precursor.. Part of ribonuclease P, a protein complex that generates mature tRNA molecules by cleaving their 5'-ends. In Methanosarcina acetivorans (strain ATCC 35395 / DSM 2834 / JCM 12185 / C2A), this protein is Ribonuclease P protein component 1.